The following is a 196-amino-acid chain: Pyridoxal 5'-phosphate synthase subunit PdxT (196 aa).

47–49 (GES) provides a ligand contact to L-glutamine. Cys-79 (nucleophile) is an active-site residue. L-glutamine is bound by residues Arg-106 and 134 to 135 (IR). Residues His-170 and Glu-172 each act as charge relay system in the active site.

This sequence belongs to the glutaminase PdxT/SNO family. In the presence of PdxS, forms a dodecamer of heterodimers. Only shows activity in the heterodimer.

The catalysed reaction is aldehydo-D-ribose 5-phosphate + D-glyceraldehyde 3-phosphate + L-glutamine = pyridoxal 5'-phosphate + L-glutamate + phosphate + 3 H2O + H(+). It catalyses the reaction L-glutamine + H2O = L-glutamate + NH4(+). The protein operates within cofactor biosynthesis; pyridoxal 5'-phosphate biosynthesis. In terms of biological role, catalyzes the hydrolysis of glutamine to glutamate and ammonia as part of the biosynthesis of pyridoxal 5'-phosphate. The resulting ammonia molecule is channeled to the active site of PdxS. In Bacillus cereus (strain G9842), this protein is Pyridoxal 5'-phosphate synthase subunit PdxT.